We begin with the raw amino-acid sequence, 270 residues long: Putative pyruvate, phosphate dikinase regulatory protein (270 aa).

Residue glycine 150–serine 157 coordinates ADP.

Belongs to the pyruvate, phosphate/water dikinase regulatory protein family. PDRP subfamily.

It carries out the reaction N(tele)-phospho-L-histidyl/L-threonyl-[pyruvate, phosphate dikinase] + ADP = N(tele)-phospho-L-histidyl/O-phospho-L-threonyl-[pyruvate, phosphate dikinase] + AMP + H(+). The catalysed reaction is N(tele)-phospho-L-histidyl/O-phospho-L-threonyl-[pyruvate, phosphate dikinase] + phosphate + H(+) = N(tele)-phospho-L-histidyl/L-threonyl-[pyruvate, phosphate dikinase] + diphosphate. In terms of biological role, bifunctional serine/threonine kinase and phosphorylase involved in the regulation of the pyruvate, phosphate dikinase (PPDK) by catalyzing its phosphorylation/dephosphorylation. This Neorickettsia sennetsu (strain ATCC VR-367 / Miyayama) (Ehrlichia sennetsu) protein is Putative pyruvate, phosphate dikinase regulatory protein.